An 844-amino-acid polypeptide reads, in one-letter code: DNA mismatch repair protein MutS (844 aa).

610 to 617 (GPNMGGKS) is a binding site for ATP.

Belongs to the DNA mismatch repair MutS family.

Functionally, this protein is involved in the repair of mismatches in DNA. It is possible that it carries out the mismatch recognition step. This protein has a weak ATPase activity. The chain is DNA mismatch repair protein MutS from Francisella tularensis subsp. holarctica (strain FTNF002-00 / FTA).